Here is a 126-residue protein sequence, read N- to C-terminus: MPELAKSAPAPKKGSKKAVTKAQKKDGKKRKRSRKESYSVYVYKVLKQVHPDTGISSKAMGIMNSFVNDIFERIASEASRLAHYNKRSTITSREIQTAVRLLLPGELAKHAVSEGTKAVTKYTSSK.

Residues 1–12 are compositionally biased toward low complexity; that stretch reads MPELAKSAPAPK. Positions 1 to 36 are disordered; that stretch reads MPELAKSAPAPKKGSKKAVTKAQKKDGKKRKRSRKE. N-acetylproline is present on Pro2. Glu3 carries the post-translational modification ADP-ribosyl glutamic acid. Residue Lys6 is modified to N6-(2-hydroxyisobutyryl)lysine; alternate. The residue at position 6 (Lys6) is an N6-(beta-hydroxybutyryl)lysine; alternate. The residue at position 6 (Lys6) is an N6-acetyllysine; alternate. At Lys6 the chain carries N6-butyryllysine; alternate. N6-crotonyllysine; alternate is present on Lys6. N6-lactoyllysine; alternate is present on Lys6. Lys6 participates in a covalent cross-link: Glycyl lysine isopeptide (Lys-Gly) (interchain with G-Cter in SUMO2); alternate. The residue at position 7 (Ser7) is an ADP-ribosylserine. Lys12 bears the N6-(beta-hydroxybutyryl)lysine; alternate mark. Residues Lys12 and Lys13 each carry the N6-acetyllysine; alternate modification. Lys12 and Lys13 each carry N6-crotonyllysine; alternate. Lys12 carries the N6-lactoyllysine; alternate modification. Lys13 is modified (N6-(2-hydroxyisobutyryl)lysine; alternate). The residue at position 15 (Ser15) is a Phosphoserine; by STK4/MST1. N6-acetyllysine; alternate occurs at positions 16, 17, 21, and 24. N6-crotonyllysine; alternate is present on residues Lys16, Lys17, Lys21, and Lys24. An N6-lactoyllysine; alternate mark is found at Lys16, Lys17, Lys21, and Lys24. An N6-(beta-hydroxybutyryl)lysine; alternate mark is found at Lys17 and Lys21. Lys17 is modified (N6-glutaryllysine; alternate). Lys21 and Lys24 each carry N6-(2-hydroxyisobutyryl)lysine; alternate. Lys21 carries the N6-butyryllysine; alternate modification. Residue Lys21 forms a Glycyl lysine isopeptide (Lys-Gly) (interchain with G-Cter in SUMO2); alternate linkage. Lys25 is subject to N6-(2-hydroxyisobutyryl)lysine. Lys35 carries the N6-(2-hydroxyisobutyryl)lysine; alternate modification. An N6-(beta-hydroxybutyryl)lysine; alternate modification is found at Lys35. Lys35 is modified (N6-crotonyllysine; alternate). An N6-glutaryllysine; alternate modification is found at Lys35. Lys35 carries the post-translational modification N6-succinyllysine; alternate. Residue Lys35 forms a Glycyl lysine isopeptide (Lys-Gly) (interchain with G-Cter in ubiquitin); alternate linkage. At Glu36 the chain carries PolyADP-ribosyl glutamic acid. The residue at position 37 (Ser37) is a Phosphoserine; by AMPK. Lys44, Lys47, and Lys58 each carry N6-(2-hydroxyisobutyryl)lysine; alternate. Position 44 is an N6-lactoyllysine; alternate (Lys44). 2 positions are modified to N6-glutaryllysine; alternate: Lys44 and Lys47. Lys47 bears the N6-methyllysine; alternate mark. Lys58 bears the N6,N6-dimethyllysine; alternate mark. Arg80 carries the post-translational modification Dimethylated arginine. Lys86 carries the N6-(2-hydroxyisobutyryl)lysine; alternate modification. Lys86 carries the N6-(beta-hydroxybutyryl)lysine; alternate modification. Lys86 carries the post-translational modification N6-acetyllysine; alternate. Position 86 is an N6-lactoyllysine; alternate (Lys86). At Lys86 the chain carries N6,N6,N6-trimethyllysine; alternate. An omega-N-methylarginine mark is found at Arg87 and Arg93. Lys109 is subject to N6-(2-hydroxyisobutyryl)lysine; alternate. An N6-lactoyllysine; alternate modification is found at Lys109. Lys109 is modified (N6-glutaryllysine; alternate). At Lys109 the chain carries N6-methyllysine; alternate. Residue Ser113 is glycosylated (O-linked (GlcNAc) serine). A Phosphothreonine modification is found at Thr116. N6-(2-hydroxyisobutyryl)lysine; alternate occurs at positions 117 and 121. N6-(beta-hydroxybutyryl)lysine; alternate occurs at positions 117 and 121. 2 positions are modified to N6-lactoyllysine; alternate: Lys117 and Lys121. Lys117 and Lys121 each carry N6-glutaryllysine; alternate. N6-succinyllysine; alternate is present on residues Lys117 and Lys121. At Lys117 the chain carries N6-malonyllysine; alternate. Lys117 carries the post-translational modification N6-methylated lysine; alternate. Residue Lys121 forms a Glycyl lysine isopeptide (Lys-Gly) (interchain with G-Cter in ubiquitin); alternate linkage.

This sequence belongs to the histone H2B family. As to quaternary structure, the nucleosome is a histone octamer containing two molecules each of H2A, H2B, H3 and H4 assembled in one H3-H4 heterotetramer and two H2A-H2B heterodimers. The octamer wraps approximately 147 bp of DNA. Post-translationally, monoubiquitination at Lys-35 (H2BK34Ub) by the MSL1/MSL2 dimer is required for histone H3 'Lys-4' (H3K4me) and 'Lys-79' (H3K79me) methylation and transcription activation at specific gene loci, such as HOXA9 and MEIS1 loci. Similarly, monoubiquitination at Lys-121 (H2BK120Ub) by the RNF20/40 complex gives a specific tag for epigenetic transcriptional activation and is also prerequisite for histone H3 'Lys-4' and 'Lys-79' methylation. It also functions cooperatively with the FACT dimer to stimulate elongation by RNA polymerase II. H2BK120Ub also acts as a regulator of mRNA splicing: deubiquitination by USP49 is required for efficient cotranscriptional splicing of a large set of exons. Phosphorylation at Ser-37 (H2BS36ph) by AMPK in response to stress promotes transcription. Phosphorylated on Ser-15 (H2BS14ph) by STK4/MST1 during apoptosis; which facilitates apoptotic chromatin condensation. Also phosphorylated on Ser-15 in response to DNA double strand breaks (DSBs), and in correlation with somatic hypermutation and immunoglobulin class-switch recombination. In terms of processing, glcNAcylation at Ser-113 promotes monoubiquitination of Lys-121. It fluctuates in response to extracellular glucose, and associates with transcribed genes. Post-translationally, ADP-ribosylated by PARP1 or PARP2 on Ser-7 (H2BS6ADPr) in response to DNA damage. H2BS6ADPr promotes recruitment of CHD1L. Mono-ADP-ribosylated on Glu-3 (H2BE2ADPr) by PARP3 in response to single-strand breaks. Poly ADP-ribosylation on Glu-36 (H2BE35ADPr) by PARP1 regulates adipogenesis: it inhibits phosphorylation at Ser-37 (H2BS36ph), thereby blocking expression of pro-adipogenetic genes. Crotonylation (Kcr) is specifically present in male germ cells and marks testis-specific genes in post-meiotic cells, including X-linked genes that escape sex chromosome inactivation in haploid cells. Crotonylation marks active promoters and enhancers and confers resistance to transcriptional repressors. It is also associated with post-meiotically activated genes on autosomes. In terms of processing, lactylated in macrophages by EP300/P300 by using lactoyl-CoA directly derived from endogenous or exogenous lactate, leading to stimulates gene transcription.

The protein localises to the nucleus. The protein resides in the chromosome. In terms of biological role, core component of nucleosome. Nucleosomes wrap and compact DNA into chromatin, limiting DNA accessibility to the cellular machineries which require DNA as a template. Histones thereby play a central role in transcription regulation, DNA repair, DNA replication and chromosomal stability. DNA accessibility is regulated via a complex set of post-translational modifications of histones, also called histone code, and nucleosome remodeling. The sequence is that of Histone H2B type 1-L from Homo sapiens (Human).